Reading from the N-terminus, the 363-residue chain is DNA primase small subunit PriS (363 aa).

Active-site residues include Asp-105, Asp-107, and Asp-265.

Belongs to the eukaryotic-type primase small subunit family. Heterodimer of a small subunit (PriS) and a large subunit (PriL). It depends on Mg(2+) as a cofactor. Requires Mn(2+) as cofactor.

Catalytic subunit of DNA primase, an RNA polymerase that catalyzes the synthesis of short RNA molecules used as primers for DNA polymerase during DNA replication. The small subunit contains the primase catalytic core and has DNA synthesis activity on its own. Binding to the large subunit stabilizes and modulates the activity, increasing the rate of DNA synthesis while decreasing the length of the DNA fragments, and conferring RNA synthesis capability. The DNA polymerase activity may enable DNA primase to also catalyze primer extension after primer synthesis. May also play a role in DNA repair. This is DNA primase small subunit PriS from Methanococcus maripaludis (strain C7 / ATCC BAA-1331).